A 423-amino-acid polypeptide reads, in one-letter code: Glucuronoxylanase XynC (423 aa).

Positions 1 to 33 (MMSSVKKTICVLLVCFTMMSVMLLGPGVTEVSA) are cleaved as a signal peptide. The active-site Proton donor is the Glu172. Catalysis depends on Glu261, which acts as the Nucleophile.

It belongs to the glycosyl hydrolase 30 family.

It is found in the secreted. The catalysed reaction is Endohydrolysis of (1-&gt;4)-beta-D-xylosyl links in some glucuronoarabinoxylans.. It participates in glycan degradation; xylan degradation. In terms of biological role, catalyzes the depolymerization of methylglucuronoxylan (MeGAXn). It cleaves the beta-1,4-xylosidic bond penultimate to that linking carbon one of the xylose residue substituted with alpha-1,2-linked 4-O-methyl-D-glucuronate (MeGA). The sequence is that of Glucuronoxylanase XynC (xynC) from Bacillus subtilis.